A 1115-amino-acid polypeptide reads, in one-letter code: Iron-regulated protein FrpA (1115 aa).

Hemolysin-type calcium-binding repeat units lie at residues 755 to 772 (FGHN…NDTL), 773 to 790 (IGGA…SDTY), 901 to 918 (NGGL…NDLL), 919 to 936 (NGDA…NDTL), 937 to 954 (DGGE…NDAL), 955 to 972 (NGGE…NDTL), and 973 to 990 (IGGA…SDTY).

Belongs to the RTX prokaryotic toxin (TC 1.C.11) family.

The protein resides in the cell outer membrane. It is found in the secreted. Functionally, may participate in the pathogenesis of meningococcal disease. The chain is Iron-regulated protein FrpA (frpA) from Neisseria meningitidis serogroup C.